The sequence spans 373 residues: Bilirubin reductase (373 aa).

Residue glutamine 92 participates in FMN binding. Arginine 168 serves as the catalytic Proton donor. Lysine 215 is a binding site for FMN. 4 residues coordinate [4Fe-4S] cluster: cysteine 344, cysteine 347, cysteine 351, and cysteine 363.

The protein belongs to the NADH:flavin oxidoreductase/NADH oxidase family. FMN serves as cofactor. It depends on [4Fe-4S] cluster as a cofactor.

The catalysed reaction is urobilinogen + 4 A = (4Z,15Z)-bilirubin IXalpha + 4 AH2. It catalyses the reaction urobilinogen + 2 A = (4Z,15Z)-mesobilirubin IXalpha + 2 AH2. It functions in the pathway porphyrin-containing compound metabolism; protoheme degradation. Its function is as follows. Bilirubin reductase that catalyzes reduction of mesobilirubin and/or bilirubin to urobilinogen, a key step during heme degradation. Cooperates with BilS, which is probably involved in electron transfer for BilR. Urobilinogen then spontaneously degrades into urobilin, which gives urine its distinctive yellow color. The protein is Bilirubin reductase of Clostridium symbiosum (strain WAL-14163).